We begin with the raw amino-acid sequence, 129 residues long: MKLFTGLIFCSLVLGVSSQWYSFIGEAVQGAWDMYRAYSDMREANYKNSDKYFHARGNYDAAQRGPGGAWAAKVISDARERSQRVTDLFKYGDSGHGVEDSKADQAANEWGRSGKDPNHFRPSGLPDKY.

The signal sequence occupies residues 1–18 (MKLFTGLIFCSLVLGVSS). Q19 carries the post-translational modification Pyrrolidone carboxylic acid. The disordered stretch occupies residues 92 to 129 (GDSGHGVEDSKADQAANEWGRSGKDPNHFRPSGLPDKY).

Belongs to the SAA family. Apolipoprotein of the HDL complex. Expressed by the liver; secreted in plasma.

The protein resides in the secreted. In terms of biological role, major acute phase reactant. The polypeptide is Serum amyloid A-2 protein (SAA2P0DJI9) (Neovison vison (American mink)).